Reading from the N-terminus, the 456-residue chain is Transforming growth factor beta-1-induced transcript 1 protein (456 aa).

Methionine 1 carries the N-acetylmethionine modification. The tract at residues 1–79 is disordered; the sequence is MEDLDALLSD…ATPPFSSSCG (79 aa). A transcription activation region spans residues 1–195; that stretch reads MEDLDALLSD…DTPSPPGPTS (195 aa). Residues 1 to 235 are interaction with PTK2B/PYK2; the sequence is MEDLDALLSD…CNKPIAGQVV (235 aa). The short motif at 3-15 is the LD motif 1 element; it reads DLDALLSDLETTT. Threonine 33 is subject to Phosphothreonine. Tyrosine 55 bears the Phosphotyrosine mark. Serine 63 carries the post-translational modification Phosphoserine. Residues 78 to 131 form an interaction with PTK2/FAK1 region; the sequence is CGVLGTGLCELDRLLQELNATQFNITDEIMSQFPSSKETAGEQKEDQSEDKKRP. Residues 87–99 carry the LD motif 2 motif; sequence ELDRLLQELNATQ. The disordered stretch occupies residues 109–146; that stretch reads QFPSSKETAGEQKEDQSEDKKRPSPPPSPSPVLPKPSA. The segment covering 116-130 has biased composition (basic and acidic residues); the sequence is TAGEQKEDQSEDKKR. Serine 132, serine 136, serine 138, serine 159, serine 181, and serine 189 each carry phosphoserine. Residues 132 to 142 show a composition bias toward pro residues; sequence SPPPSPSPVLP. The LD motif 3 motif lies at 152 to 163; sequence ELDRLMASLSDF. Residues 166–200 form a disordered region; the sequence is QNHLPASGPTPPPVPSSMSEDTPSPPGPTSKGSLD. An LD motif 4 motif is present at residues 198–210; it reads SLDTMLGLLQSDL. LIM zinc-binding domains lie at 221–280, 281–338, 339–398, and 399–456; these read GLCG…RFSP, RCGL…QLFA, PRCQ…RRGS, and LCAT…KLFG. Serine 398 carries the phosphoserine modification. Residue threonine 402 is modified to Phosphothreonine.

Belongs to the paxillin family. In terms of assembly, homooligomer. Interacts with CRIP2, HSPB1, ILK, LIMS1, LIMS2, NCK2, NUDT16L1, PAK, PPARG, PTPN12, TCF3, TCF7L2 and VCL. Forms a complex with GIT1 and ARHGEF7. Interacts with AR/androgen receptor in a ligand-dependent manner. Interacts with CSK, LYN, MAPK15, NR3C1, PPARG, PTK2/FAK1, PTK2B/PYK2, SLC6A3, SLC6A4, SMAD3, SRC and talin. Interacts (via LIM zinc-binding domain 2) with CBLC (via RING-type zinc finger); the interaction is direct and enhances CBLC E3 ubiquitin-protein ligase activity. Phosphorylated by gonadotropin-releasing hormone-activated SRC.

It is found in the cell junction. The protein resides in the focal adhesion. Its subcellular location is the nucleus matrix. The protein localises to the cytoplasm. It localises to the cytoskeleton. Functions as a molecular adapter coordinating multiple protein-protein interactions at the focal adhesion complex and in the nucleus. Links various intracellular signaling modules to plasma membrane receptors and regulates the Wnt and TGFB signaling pathways. May also regulate SLC6A3 and SLC6A4 targeting to the plasma membrane hence regulating their activity. In the nucleus, functions as a nuclear receptor coactivator regulating glucocorticoid, androgen, mineralocorticoid and progesterone receptor transcriptional activity. May play a role in the processes of cell growth, proliferation, migration, differentiation and senescence. May have a zinc-dependent DNA-binding activity. The protein is Transforming growth factor beta-1-induced transcript 1 protein (TGFB1I1) of Bos taurus (Bovine).